We begin with the raw amino-acid sequence, 641 residues long: Putative ABC transporter ATP-binding protein MA_0870 (641 aa).

The ABC transporter 1 domain maps to 10-250; sequence IEIKDLWYTY…IEVFHRLGLR (241 aa). 44–51 is a binding site for ATP; it reads GPTGCGKS. The interval 286–332 is disordered; it reads VKTPRNFSNPEEETGRRTDPAERNEFVNTGSGNIKYGDNRSENKGSE. Composition is skewed to basic and acidic residues over residues 298 to 310 and 322 to 332; these read ETGR…ERNE and GDNRSENKGSE. Positions 338 to 566 constitute an ABC transporter 2 domain; that stretch reads ISIRDLWSGY…IEILKQASLT (229 aa). 371 to 378 provides a ligand contact to ATP; that stretch reads GTNGSGKS.

This sequence belongs to the ABC transporter superfamily.

Its subcellular location is the cell membrane. In terms of biological role, probably part of an ABC transporter complex. Responsible for energy coupling to the transport system. This is Putative ABC transporter ATP-binding protein MA_0870 from Methanosarcina acetivorans (strain ATCC 35395 / DSM 2834 / JCM 12185 / C2A).